The following is a 691-amino-acid chain: Protein phosphatase Slingshot homolog (691 aa).

Residues 236–291 (EETERIIKLKLRDILRESDLENITSKEVRSALEQHTLCALQDYKEFIDNEMIIILA) enclose the DEK-C domain. The 142-residue stretch at 295 to 436 (RPSEIFPYLY…LQTYQGILGA (142 aa)) folds into the Tyrosine-protein phosphatase domain. Residue Cys-380 is the Phosphocysteine intermediate of the active site. Residues 532-580 (NEHVLSKEQIIQEEKKVMELEKGPEWVVKNNVLEEMKETEERELPNFEL) adopt a coiled-coil conformation. Residues 585–620 (NQSRERDQETIKESSVITQGSSSLDEVFESSTPTRS) are disordered. Residues 587–596 (SRERDQETIK) are compositionally biased toward basic and acidic residues. Residues 597–619 (ESSVITQGSSSLDEVFESSTPTR) show a composition bias toward polar residues.

This sequence belongs to the protein-tyrosine phosphatase family. Interacts with actin and this stimulates phosphatase activity.

Its subcellular location is the cytoplasm. It localises to the cytoskeleton. The protein resides in the cleavage furrow. The protein localises to the midbody. It catalyses the reaction O-phospho-L-tyrosyl-[protein] + H2O = L-tyrosyl-[protein] + phosphate. The enzyme catalyses O-phospho-L-seryl-[protein] + H2O = L-seryl-[protein] + phosphate. It carries out the reaction O-phospho-L-threonyl-[protein] + H2O = L-threonyl-[protein] + phosphate. Functionally, protein phosphatase which regulates actin filament dynamics. Dephosphorylates and activates the actin binding/depolymerizing factor cofilin, which subsequently binds to actin filaments and stimulates their disassembly. Required for completion of the gastrulation movement and for cytokinesis. The chain is Protein phosphatase Slingshot homolog (ssh) from Xenopus laevis (African clawed frog).